The primary structure comprises 231 residues: Cilia- and flagella-associated protein 299 (231 aa).

It localises to the cytoplasm. Its subcellular location is the nucleus. Functionally, may be involved in spermatogenesis. The chain is Cilia- and flagella-associated protein 299 from Bos taurus (Bovine).